A 373-amino-acid chain; its full sequence is tRNA-specific 2-thiouridylase MnmA (373 aa).

Residues 12-19 (GMSGGVDS) and Met38 contribute to the ATP site. Positions 98 to 100 (NPD) are interaction with target base in tRNA. Cys103 functions as the Nucleophile in the catalytic mechanism. A disulfide bridge connects residues Cys103 and Cys200. Residue Gly127 participates in ATP binding. Positions 150–152 (KDQ) are interaction with tRNA. The active-site Cysteine persulfide intermediate is Cys200. The interval 312 to 313 (RY) is interaction with tRNA.

This sequence belongs to the MnmA/TRMU family.

Its subcellular location is the cytoplasm. The catalysed reaction is S-sulfanyl-L-cysteinyl-[protein] + uridine(34) in tRNA + AH2 + ATP = 2-thiouridine(34) in tRNA + L-cysteinyl-[protein] + A + AMP + diphosphate + H(+). Catalyzes the 2-thiolation of uridine at the wobble position (U34) of tRNA, leading to the formation of s(2)U34. The sequence is that of tRNA-specific 2-thiouridylase MnmA from Streptococcus mutans serotype c (strain ATCC 700610 / UA159).